Here is a 310-residue protein sequence, read N- to C-terminus: tRNA pseudouridine synthase B (310 aa).

The Nucleophile role is filled by Asp-49.

Belongs to the pseudouridine synthase TruB family. Type 1 subfamily.

It carries out the reaction uridine(55) in tRNA = pseudouridine(55) in tRNA. Its function is as follows. Responsible for synthesis of pseudouridine from uracil-55 in the psi GC loop of transfer RNAs. The sequence is that of tRNA pseudouridine synthase B from Rhizobium etli (strain ATCC 51251 / DSM 11541 / JCM 21823 / NBRC 15573 / CFN 42).